The chain runs to 100 residues: Urease subunit gamma (100 aa).

This sequence belongs to the urease gamma subunit family. In terms of assembly, heterotrimer of UreA (gamma), UreB (beta) and UreC (alpha) subunits. Three heterotrimers associate to form the active enzyme.

The protein resides in the cytoplasm. It carries out the reaction urea + 2 H2O + H(+) = hydrogencarbonate + 2 NH4(+). It participates in nitrogen metabolism; urea degradation; CO(2) and NH(3) from urea (urease route): step 1/1. In Jannaschia sp. (strain CCS1), this protein is Urease subunit gamma.